The primary structure comprises 1012 residues: AP-2 complex subunit alpha-1 (1012 aa).

4 HEAT repeats span residues 254-289 (AMRALQYFPTIEDPSTRKALFEVLQRILMGTDVVKN), 354-391 (DIIKKHQSQIITSLKDPDISIRRRALDLLYGMCDVSNA), 393-430 (DIVEELLQYLSTAEFSMREELSLKAAILAEKFAPDLSW), and 525-565 (PTIP…CIDV). The disordered stretch occupies residues 652–678 (STDPESVARSLSHPNGTLSNIDPQTPS). The span at 663–675 (SHPNGTLSNIDPQ) shows a compositional bias: polar residues. The region spanning 742–841 (ALCLKDSGVL…LDFSYKFGAN (100 aa)) is the GAE domain.

This sequence belongs to the adaptor complexes large subunit family. In terms of assembly, adaptor protein complex 2 (AP-2) is a heterotetramer composed of two large adaptins (alpha-type and beta-type subunits), a medium adaptin (mu-type subunit) and a small adaptin (sigma-type subunit). Binds to EPSIN2.

It localises to the membrane. The protein localises to the coated pit. Functionally, subunit of the adaptor protein complex 2 (AP-2). Adaptor protein complexes function in protein transport via transport vesicles in different membrane traffic pathways. Adaptor protein complexes are vesicle coat components and appear to be involved in cargo selection and vesicle formation. AP-2 is involved in clathrin-dependent endocytosis in which cargo proteins are incorporated into vesicles surrounded by clathrin (clathrin-coated vesicles, CCVs) which are destined for fusion with the early endosome. The complex binds polyphosphoinositides. This Arabidopsis thaliana (Mouse-ear cress) protein is AP-2 complex subunit alpha-1 (ALPHA-ADR).